Here is a 164-residue protein sequence, read N- to C-terminus: Cyanate hydratase (164 aa).

Residues Arg90, Glu93, and Ser116 contribute to the active site.

This sequence belongs to the cyanase family.

It catalyses the reaction cyanate + hydrogencarbonate + 3 H(+) = NH4(+) + 2 CO2. Its function is as follows. Catalyzes the reaction of cyanate with bicarbonate to produce ammonia and carbon dioxide. The protein is Cyanate hydratase of Ricinus communis (Castor bean).